Reading from the N-terminus, the 120-residue chain is Immunoglobulin kappa variable 2D-29 (120 aa).

Positions 1–20 are cleaved as a signal peptide; it reads MRLPAQLLGLLMLWIPGSSA. The tract at residues 21–43 is framework-1; it reads DIVMTQTPLSLSVTPGQPASISC. Positions 21 to 120 constitute an Ig-like domain; it reads DIVMTQTPLS…YYCMQSIQLP (100 aa). A disulfide bridge links cysteine 43 with cysteine 113. The interval 44–59 is complementarity-determining-1; the sequence is KSSQSLLHSDGKTYLY. Residues 60–74 are framework-2; it reads WYLQKPGQPPQLLIY. The tract at residues 75–81 is complementarity-determining-2; sequence EVSNRFS. A framework-3 region spans residues 82–113; the sequence is GVPDRFSGSGSGTDFTLKISRVEAEDVGVYYC. The tract at residues 114-120 is complementarity-determining-3; the sequence is MQSIQLP.

In terms of assembly, immunoglobulins are composed of two identical heavy chains and two identical light chains; disulfide-linked.

Its subcellular location is the secreted. The protein localises to the cell membrane. In terms of biological role, v region of the variable domain of immunoglobulin light chains that participates in the antigen recognition. Immunoglobulins, also known as antibodies, are membrane-bound or secreted glycoproteins produced by B lymphocytes. In the recognition phase of humoral immunity, the membrane-bound immunoglobulins serve as receptors which, upon binding of a specific antigen, trigger the clonal expansion and differentiation of B lymphocytes into immunoglobulins-secreting plasma cells. Secreted immunoglobulins mediate the effector phase of humoral immunity, which results in the elimination of bound antigens. The antigen binding site is formed by the variable domain of one heavy chain, together with that of its associated light chain. Thus, each immunoglobulin has two antigen binding sites with remarkable affinity for a particular antigen. The variable domains are assembled by a process called V-(D)-J rearrangement and can then be subjected to somatic hypermutations which, after exposure to antigen and selection, allow affinity maturation for a particular antigen. The chain is Immunoglobulin kappa variable 2D-29 from Homo sapiens (Human).